We begin with the raw amino-acid sequence, 212 residues long: MAIGLIGRKVGMTRIFNEDGASVPVTVIEIAANRVTQVKTLDTDGYRALQVTTGTKKANRITKPEAGHFAKAGVEAGRGLWELRLADGDGEGIEVGAELNVDIFADIAKVDVTGQSKGKGFQGGIKRWNFHAQDMTHGNSLAHRSNGSIGQNQTPGRVFKGKKMSGHMGAERVTTQNLDIVRVDAERNLLLVKGAVPGATNGDLIIKPAVKA.

An N5-methylglutamine modification is found at glutamine 153.

Belongs to the universal ribosomal protein uL3 family. In terms of assembly, part of the 50S ribosomal subunit. Forms a cluster with proteins L14 and L19. In terms of processing, methylated by PrmB.

Its function is as follows. One of the primary rRNA binding proteins, it binds directly near the 3'-end of the 23S rRNA, where it nucleates assembly of the 50S subunit. This is Large ribosomal subunit protein uL3 from Shewanella piezotolerans (strain WP3 / JCM 13877).